Here is a 436-residue protein sequence, read N- to C-terminus: UDP-N-acetylmuramate--L-alanine ligase (436 aa).

108–114 contacts ATP; sequence GAHGKTS.

Belongs to the MurCDEF family.

The protein resides in the cytoplasm. The catalysed reaction is UDP-N-acetyl-alpha-D-muramate + L-alanine + ATP = UDP-N-acetyl-alpha-D-muramoyl-L-alanine + ADP + phosphate + H(+). Its pathway is cell wall biogenesis; peptidoglycan biosynthesis. Functionally, cell wall formation. The protein is UDP-N-acetylmuramate--L-alanine ligase of Bacillus cereus (strain G9842).